The sequence spans 281 residues: Glyoxalase 1 (281 aa).

VOC domains follow at residues 4-127 and 132-251; these read RALH…IGKA and KVLR…FVGD.

Belongs to the glyoxalase I family. As to expression, expressed in the following tissues in both larvae and adults: pharynx, pharyngeal-intestinal valve, intestine, anal sphincter, vulval muscle, seam cells and the nervous system.

In terms of biological role, thought to act as a glyoxalase. May remove methylglyoxal from mitochondrial proteins. Has roles in reducing oxidative stress and increasing lifespan. This Caenorhabditis elegans protein is Glyoxalase 1 (glod-4).